The chain runs to 180 residues: DNA-directed RNA polymerase subunit Rpo7 (180 aa).

Residues 82–165 form the S1 motif domain; that stretch reads QEVVEGEVLQ…RLPRIALTMR (84 aa).

The protein belongs to the eukaryotic RPB7/RPC8 RNA polymerase subunit family. In terms of assembly, part of the 13-subunit RNA polymerase complex. Forms a stalk with Rpo4 that extends from the main structure.

It is found in the cytoplasm. It carries out the reaction RNA(n) + a ribonucleoside 5'-triphosphate = RNA(n+1) + diphosphate. Its function is as follows. DNA-dependent RNA polymerase (RNAP) catalyzes the transcription of DNA into RNA using the four ribonucleoside triphosphates as substrates. The highly mobile Rpo4/Rpo7 heterodimer is conditionally required for transcription initiation. This is DNA-directed RNA polymerase subunit Rpo7 from Saccharolobus shibatae (strain ATCC 51178 / DSM 5389 / JCM 8931 / NBRC 15437 / B12) (Sulfolobus shibatae).